A 360-amino-acid polypeptide reads, in one-letter code: Arginase, non-hepatic 1 (360 aa).

Residues His122, Asp145, His147, and Asp149 each coordinate Mn(2+). Residues 147–151, 158–160, and Asp204 contribute to the substrate site; these read HADIN and SGN. Residues Asp253 and Asp255 each coordinate Mn(2+). Residues Thr267 and Glu298 each contribute to the substrate site.

It belongs to the arginase family. In terms of assembly, homotrimer. The cofactor is Mn(2+). In terms of tissue distribution, expressed at differing tadpole stages in tail, intestine, hindlimb and trunk region. Most abundant in tadpole tail.

The catalysed reaction is L-arginine + H2O = urea + L-ornithine. The protein operates within nitrogen metabolism; urea cycle; L-ornithine and urea from L-arginine: step 1/1. In terms of biological role, as well as its role in the urea cycle, may be involved in tissue remodeling. This is Arginase, non-hepatic 1 (arg2-a) from Xenopus laevis (African clawed frog).